Consider the following 258-residue polypeptide: Polysialic acid transport protein KpsM (258 aa).

Over 1-30 (MARSGFEVQKVTVEALFLREIRTRFGKFRL) the chain is Cytoplasmic. Positions 30-251 (LGYLWAILEP…FIGLALYRTR (222 aa)) constitute an ABC transmembrane type-2 domain. The chain crosses the membrane as a helical span at residues 31–54 (GYLWAILEPSAHLLILLGILGYVM). Over 55–61 (HRTMPDI) the chain is Periplasmic. The helical transmembrane segment at 62–81 (SFPVFLLNGLIPFFIFSSIS) threads the bilayer. Residues 82–108 (KRSIGAIEANQGLFNYRPVKPIDTIIA) lie on the Cytoplasmic side of the membrane. Residues 109-132 (RALLETLIYVAVYILLMLIVWMTG) traverse the membrane as a helical segment. The Periplasmic segment spans residues 133–143 (EYFEITNFLQL). The chain crosses the membrane as a helical span at residues 144–165 (VLTWSLLIILSCGVGLIFMVVG). The Cytoplasmic portion of the chain corresponds to 166 to 174 (KTFPEMQKV). The chain crosses the membrane as a helical span at residues 175–195 (LPILLKPLYFISCIMFPLHSI). Residues 196–226 (PKQYWSYLLWNPLVHVVELSREAVMPGYISE) are Periplasmic-facing. A helical membrane pass occupies residues 227-247 (GVSLNYLAMFTLVTLFIGLAL). Over 248–258 (YRTREEAMLTS) the chain is Cytoplasmic.

Belongs to the ABC-2 integral membrane protein family.

Its subcellular location is the cell inner membrane. Its function is as follows. KpsM and KpsT constitute a system for the transport of polysialic acid across the cytoplasmic membrane. The polypeptide is Polysialic acid transport protein KpsM (kpsM) (Escherichia coli).